A 460-amino-acid polypeptide reads, in one-letter code: UDP-N-acetylmuramate--L-alanine ligase (460 aa).

112–118 contacts ATP; the sequence is GTHGKTT.

Belongs to the MurCDEF family.

The protein localises to the cytoplasm. It carries out the reaction UDP-N-acetyl-alpha-D-muramate + L-alanine + ATP = UDP-N-acetyl-alpha-D-muramoyl-L-alanine + ADP + phosphate + H(+). The protein operates within cell wall biogenesis; peptidoglycan biosynthesis. In terms of biological role, cell wall formation. The chain is UDP-N-acetylmuramate--L-alanine ligase from Pelobacter propionicus (strain DSM 2379 / NBRC 103807 / OttBd1).